The following is a 308-amino-acid chain: Thymidylate synthase (308 aa).

Residues arginine 26 and 170–171 (RR) each bind dUMP. Catalysis depends on cysteine 190, which acts as the Nucleophile. DUMP is bound by residues 210–213 (RSCD), asparagine 221, and 251–253 (HVY). Aspartate 213 serves as a coordination point for (6R)-5,10-methylene-5,6,7,8-tetrahydrofolate. Alanine 307 contacts (6R)-5,10-methylene-5,6,7,8-tetrahydrofolate.

Belongs to the thymidylate synthase family. Bacterial-type ThyA subfamily. As to quaternary structure, homodimer.

It is found in the cytoplasm. It carries out the reaction dUMP + (6R)-5,10-methylene-5,6,7,8-tetrahydrofolate = 7,8-dihydrofolate + dTMP. The protein operates within pyrimidine metabolism; dTTP biosynthesis. Catalyzes the reductive methylation of 2'-deoxyuridine-5'-monophosphate (dUMP) to 2'-deoxythymidine-5'-monophosphate (dTMP) while utilizing 5,10-methylenetetrahydrofolate (mTHF) as the methyl donor and reductant in the reaction, yielding dihydrofolate (DHF) as a by-product. This enzymatic reaction provides an intracellular de novo source of dTMP, an essential precursor for DNA biosynthesis. The protein is Thymidylate synthase of Rhizorhabdus wittichii (strain DSM 6014 / CCUG 31198 / JCM 15750 / NBRC 105917 / EY 4224 / RW1) (Sphingomonas wittichii).